A 182-amino-acid polypeptide reads, in one-letter code: Ribosome maturation factor RimM (182 aa).

The region spanning 103–182 (EGDYYWKDLM…SIEVDWDPGF (80 aa)) is the PRC barrel domain.

It belongs to the RimM family. As to quaternary structure, binds ribosomal protein uS19.

It localises to the cytoplasm. Its function is as follows. An accessory protein needed during the final step in the assembly of 30S ribosomal subunit, possibly for assembly of the head region. Essential for efficient processing of 16S rRNA. May be needed both before and after RbfA during the maturation of 16S rRNA. It has affinity for free ribosomal 30S subunits but not for 70S ribosomes. This chain is Ribosome maturation factor RimM, found in Escherichia coli O139:H28 (strain E24377A / ETEC).